The following is a 122-amino-acid chain: Large ribosomal subunit protein uL14 (122 aa).

The protein belongs to the universal ribosomal protein uL14 family. As to quaternary structure, part of the 50S ribosomal subunit. Forms a cluster with proteins L3 and L19. In the 70S ribosome, L14 and L19 interact and together make contacts with the 16S rRNA in bridges B5 and B8.

Functionally, binds to 23S rRNA. Forms part of two intersubunit bridges in the 70S ribosome. The sequence is that of Large ribosomal subunit protein uL14 from Salinibacter ruber (strain DSM 13855 / M31).